The chain runs to 304 residues: Acetylglutamate kinase (304 aa).

Substrate contacts are provided by residues 64–65 (GG), Arg86, and Asn181.

The protein belongs to the acetylglutamate kinase family. ArgB subfamily.

It is found in the plastid. The protein localises to the chloroplast. It carries out the reaction N-acetyl-L-glutamate + ATP = N-acetyl-L-glutamyl 5-phosphate + ADP. Its pathway is amino-acid biosynthesis; L-arginine biosynthesis; N(2)-acetyl-L-ornithine from L-glutamate: step 2/4. In terms of biological role, catalyzes the ATP-dependent phosphorylation of N-acetyl-L-glutamate. The sequence is that of Acetylglutamate kinase from Cyanidium caldarium (Red alga).